We begin with the raw amino-acid sequence, 526 residues long: Zinc finger protein 69 homolog (526 aa).

Residues 1–39 (MPQQLLITLPTEASTWVKLQHPKKAVEGAPLWEDVTKMF) enclose the SCAN box domain. In terms of domain architecture, KRAB spans 76–147 (LTFKDISIDF…EKEGPGDPSS (72 aa)). C2H2-type zinc fingers lie at residues 271-293 (YECNICEKIFKQPIHLTEHMRIH), 299-321 (FRCKECGRAFSQSASLSTHQRIH), 327-349 (FECEECGKAFRHRSSLNQHHRTH), 355-377 (YVCDKCQKAFSQNISLVQHLRTH), 383-405 (FTCNECGKTFRQIRHLSEHIRIH), 411-433 (YACTACCKTFSHRAYLTHHQRIH), 439-461 (YKCKECGKAFRQRIHLSNHKTVH), 467-489 (YECNRCGKAYRHDSSFKKHQRHH), and 495-517 (YECNECGKAFSYNSSLSRHHEIH).

The protein belongs to the krueppel C2H2-type zinc-finger protein family. In terms of tissue distribution, expressed in visceral and subcutaneous adipose tissue.

The protein resides in the nucleus. In terms of biological role, putative transcription factor that appears to regulate lipid metabolism. This chain is Zinc finger protein 69 homolog (ZFP69), found in Homo sapiens (Human).